We begin with the raw amino-acid sequence, 237 residues long: Carboxy-S-adenosyl-L-methionine synthase (237 aa).

Residues tyrosine 40, 65–67 (GCS), 116–117 (DI), asparagine 131, and arginine 194 each bind S-adenosyl-L-methionine.

The protein belongs to the class I-like SAM-binding methyltransferase superfamily. Cx-SAM synthase family. In terms of assembly, homodimer.

It catalyses the reaction prephenate + S-adenosyl-L-methionine = carboxy-S-adenosyl-L-methionine + 3-phenylpyruvate + H2O. Its function is as follows. Catalyzes the conversion of S-adenosyl-L-methionine (SAM) to carboxy-S-adenosyl-L-methionine (Cx-SAM). This is Carboxy-S-adenosyl-L-methionine synthase from Dichelobacter nodosus (strain VCS1703A).